The sequence spans 455 residues: Tubby-like F-box protein 1 (455 aa).

The 59-residue stretch at 54–112 (ETPWANLPPELLRDVIKRLEESESVWPARRHVVACASVCRSWRDMCKEIVQSPELSGKI) folds into the F-box domain. The tract at residues 386 to 414 (QPQPQPQPQPQPQPLTQPQPSGQTDGPDK) is disordered. Residues 388-402 (QPQPQPQPQPQPLTQ) are compositionally biased toward pro residues.

This sequence belongs to the TUB family. In terms of tissue distribution, ubiquitous.

In Arabidopsis thaliana (Mouse-ear cress), this protein is Tubby-like F-box protein 1.